Here is a 336-residue protein sequence, read N- to C-terminus: Dihydroorotate dehydrogenase (quinone) (336 aa).

FMN is bound by residues 62–66 (AGLDK) and T86. Residue K66 coordinates substrate. 111–115 (NRMGF) contacts substrate. FMN is bound by residues N139 and N172. N172 provides a ligand contact to substrate. The active-site Nucleophile is S175. Residue N177 participates in substrate binding. K217 and T245 together coordinate FMN. 246–247 (NT) is a substrate binding site. Residues G268, G297, and 318 to 319 (YT) contribute to the FMN site.

This sequence belongs to the dihydroorotate dehydrogenase family. Type 2 subfamily. Monomer. Requires FMN as cofactor.

The protein resides in the cell membrane. It catalyses the reaction (S)-dihydroorotate + a quinone = orotate + a quinol. It participates in pyrimidine metabolism; UMP biosynthesis via de novo pathway; orotate from (S)-dihydroorotate (quinone route): step 1/1. In terms of biological role, catalyzes the conversion of dihydroorotate to orotate with quinone as electron acceptor. This Pseudoalteromonas translucida (strain TAC 125) protein is Dihydroorotate dehydrogenase (quinone).